A 257-amino-acid chain; its full sequence is Flap endonuclease Xni (257 aa).

Asp109 is a Mg(2+) binding site. The region spanning 165–255 is the 5'-3' exonuclease domain; it reads LKPEQLADYW…FNLQDIRYEK (91 aa). K(+) is bound by residues Leu176, Ala177, Ile187, and Ile190. Residues 189-194 are interaction with DNA; that stretch reads GIGPKA.

The protein belongs to the Xni family. Mg(2+) is required as a cofactor. K(+) serves as cofactor.

In terms of biological role, has flap endonuclease activity. During DNA replication, flap endonucleases cleave the 5'-overhanging flap structure that is generated by displacement synthesis when DNA polymerase encounters the 5'-end of a downstream Okazaki fragment. The sequence is that of Flap endonuclease Xni from Aliivibrio salmonicida (strain LFI1238) (Vibrio salmonicida (strain LFI1238)).